The primary structure comprises 636 residues: Ligand-gated ion channel 4 (636 aa).

Residues 1–25 (MVICHSCTTFCILLVIDLVPCRIVG) form the signal peptide. Residues 26 to 326 (MENVENRVMF…IHMHRRPLFY (301 aa)) lie on the Extracellular side of the membrane. Asparagine 45, asparagine 141, asparagine 179, and asparagine 227 each carry an N-linked (GlcNAc...) asparagine glycan. Cysteine 240 and cysteine 254 are joined by a disulfide. A glycan (N-linked (GlcNAc...) asparagine) is linked at asparagine 284. Transmembrane regions (helical) follow at residues 327-347 (VFNH…GFLM), 357-377 (MIIT…ESIP), and 383-403 (VPLI…ATCV). Residues 404 to 602 (NVITLNMHRN…QLASVVDRLL (199 aa)) lie on the Cytoplasmic side of the membrane. Residues 603-623 (LCLFCTATLFTIICLLIVPVV) traverse the membrane as a helical segment.

This sequence belongs to the ligand-gated ion channel (TC 1.A.9) family.

The protein localises to the postsynaptic cell membrane. The protein resides in the cell membrane. Its function is as follows. Acetylcholine receptor. The sequence is that of Ligand-gated ion channel 4 from Caenorhabditis briggsae.